Here is an 825-residue protein sequence, read N- to C-terminus: MAAGKFASLPRHMPVNHQFPLASSMDLLSSKSPLAEHRTEAYPDVSIHGTLPRKKKGPPPIRSCDSASHMGTLPHSKSPRQSSPLTQDLILEKPLPDWKGDSFAFRDPYLLDPTLEYVKFSKERHIMDRTPERLKKELEEELLLSSEDLRSHAWYHGRIPRQVSENLVQRDGDFLVRDSLSSPGNFVLTCQWKNLAQHFKINRTVLRLSEAYSRVQYQFEMESFDSIPGLVRCYVGNRRPISQQSGAIIFQPINRTVPLWCLEERYGTSPGRGREGSFAEGRPDVVKRLSLTTGGIQARDHSLPRGNLLRNKDKSGSQPACLDHVQDRKAATLKAHQSESHLPIGCKLPPQSPSVDTSPCPNSPVFRTGSEPTLSPALVRRFSSDARAGEALRGSDSQLCPKPPPKPCKVPFLKVPPSPSPWLNSEANYCELNPAFAVGCDRGAKLLSQALDSHEMLLTAKQNGASGPRNSGINYSILDGDDQGRHWDPLAVQTDEGQEDETKFVPPVMETVSSFRPNDFESKLLPPENKPLETAMLKHAKELFTNHDARVIAQHMLSVDCKVARILEVSEDMKRSMGVSSGLELITLPHGRQLRLDIIERHNTMAIGIAVDILGCTGTLENRAGTLNKIIQVAMELKDTMGDLYSFSAIMKALEMPQITRLEKTWTALRHHYTQTAILYEKQLKPFSKILHEGRESTYVPASSVSVPLLMPLVTLMERQAVTFEGTDMWEKNDESCEIMLSHLATARFMAEASESYRMNAERVLADFQPDEEMTEILKTEFQMRLLWGSKGAEVNQNERYDKFNQILTALSRKLEPPSGKQAEL.

Alanine 2 bears the N-acetylalanine mark. Phosphoserine occurs at positions 32, 78, 83, 182, and 290. Positions 40–84 are disordered; it reads EAYPDVSIHGTLPRKKKGPPPIRSCDSASHMGTLPHSKSPRQSSP. An SH2 domain is found at 154 to 253; it reads WYHGRIPRQV…QSGAIIFQPI (100 aa). The tract at residues 300-320 is disordered; sequence DHSLPRGNLLRNKDKSGSQPA. Lysine 334 carries the N6-methyllysine modification. Phosphoserine occurs at positions 358, 363, and 375. Arginine 442 bears the Omega-N-methylarginine mark. Position 471 is a phosphoserine (serine 471). The region spanning 548-818 is the Ras-GEF domain; sequence DARVIAQHML…TALSRKLEPP (271 aa). Residues 744-748 form a mediates the interaction with BCAR1/p130CAS region; sequence LATAR.

As to quaternary structure, part of a complex comprised of PTPRA, BCAR1, BCAR3 and SRC; the formation of the complex is dependent on integrin mediated-tyrosine phosphorylation of PTPRA. Within the complex, interacts (via SH2 domain) with PTPRA (when phosphorylated on 'Tyr-792'). Interacts (via Ras-GEF domain) with BCAR1. Interacts (via Ras-GEF domain) with NEDD9. Interacts with PTK2/FAK1. Interacts with PTPN1. Interacts (via SH2 domain) with EGFR (when tyrosine-phosphorylated). In terms of processing, phosphorylated on tyrosine residues.

The protein resides in the cytoplasm. It localises to the cell junction. The protein localises to the focal adhesion. In terms of biological role, acts as an adapter protein downstream of several growth factor receptors to promote cell proliferation, migration, and redistribution of actin fibers. Specifically involved in INS/insulin signaling pathway by mediating MAPK1/ERK2-MAPK3/ERK1 activation and DNA synthesis. Promotes insulin-mediated membrane ruffling. In response to vasoconstrictor peptide EDN1, involved in the activation of RAP1 downstream of PTK2B via interaction with phosphorylated BCAR1. Inhibits cell migration and invasion via regulation of TGFB-mediated matrix digestion, actin filament rearrangement, and inhibition of invadopodia activity. May inhibit TGFB/SMAD signaling, via facilitating BCAR1 and SMAD2 and/or SMAD3 interaction. Regulates EGF-induced DNA synthesis. Required for the maintenance of ocular lens morphology and structural integrity, potentially via regulation of focal adhesion complex signaling. Acts upstream of PTPRA to regulate the localization of BCAR1 and PTPRA to focal adhesions, via regulation of SRC-mediated phosphorylation of PTPRA. Positively regulates integrin-induced tyrosine phosphorylation of BCAR1. Acts as a guanine nucleotide exchange factor (GEF) for small GTPases RALA, RAP1A and RRAS. However, in a contrasting study, lacks GEF activity towards RAP1. This Rattus norvegicus (Rat) protein is Breast cancer anti-estrogen resistance protein 3 homolog.